The sequence spans 122 residues: Large ribosomal subunit protein uL14 (122 aa).

Belongs to the universal ribosomal protein uL14 family. Part of the 50S ribosomal subunit. Forms a cluster with proteins L3 and L19. In the 70S ribosome, L14 and L19 interact and together make contacts with the 16S rRNA in bridges B5 and B8.

Functionally, binds to 23S rRNA. Forms part of two intersubunit bridges in the 70S ribosome. This is Large ribosomal subunit protein uL14 from Corynebacterium glutamicum (strain R).